We begin with the raw amino-acid sequence, 114 residues long: Beta-microseminoprotein J1 (114 aa).

Residues 1-20 form the signal peptide; it reads MNVLLGGLVIFATFVTLCNA. 5 cysteine pairs are disulfide-bonded: Cys-22-Cys-70, Cys-38-Cys-62, Cys-57-Cys-93, Cys-60-Cys-69, and Cys-84-Cys-107.

It belongs to the beta-microseminoprotein family.

Its subcellular location is the secreted. The polypeptide is Beta-microseminoprotein J1 (MSPJ) (Saguinus oedipus (Cotton-top tamarin)).